Here is a 351-residue protein sequence, read N- to C-terminus: Homeobox-leucine zipper protein HOX23 (351 aa).

The interval 34–128 (LQDHAHGGHG…SFESGNKLEP (95 aa)) is disordered. Over residues 56–65 (SPFLPDLAMD) the composition is skewed to low complexity. The homeobox DNA-binding region spans 101–160 (GGEKKRRLSVEQVRTLERSFESGNKLEPERKAQLARALGLQPRQVAIWFQNRRARWKTKQ). Basic and acidic residues predominate over residues 114-128 (RTLERSFESGNKLEP). The tract at residues 159–203 (KQLEKDFDALRRQLDAARAENDALLSLNSKLHAEIVALKGGAAAA) is leucine-zipper. A disordered region spans residues 227–263 (EASCSNRSENSSEINLDISRPAPPPPPPPANESPVNR). Residues 228-240 (ASCSNRSENSSEI) show a composition bias toward polar residues. The segment covering 247–257 (PAPPPPPPPAN) has biased composition (pro residues).

This sequence belongs to the HD-ZIP homeobox family. Class I subfamily. As to expression, expressed in seedlings, roots, stems, leaf sheaths and panicles.

It localises to the nucleus. Functionally, probable transcription factor. In Oryza sativa subsp. indica (Rice), this protein is Homeobox-leucine zipper protein HOX23 (HOX23).